The sequence spans 221 residues: Endonuclease V (221 aa).

The Mg(2+) site is built by aspartate 44 and aspartate 112.

This sequence belongs to the endonuclease V family. It depends on Mg(2+) as a cofactor.

It localises to the cytoplasm. The catalysed reaction is Endonucleolytic cleavage at apurinic or apyrimidinic sites to products with a 5'-phosphate.. Its function is as follows. DNA repair enzyme involved in the repair of deaminated bases. Selectively cleaves double-stranded DNA at the second phosphodiester bond 3' to a deoxyinosine leaving behind the intact lesion on the nicked DNA. In Nostoc sp. (strain PCC 7120 / SAG 25.82 / UTEX 2576), this protein is Endonuclease V.